We begin with the raw amino-acid sequence, 410 residues long: Phosphopentomutase (410 aa).

Residues aspartate 10, aspartate 309, histidine 314, aspartate 350, histidine 351, and histidine 362 each contribute to the Mn(2+) site.

The protein belongs to the phosphopentomutase family. It depends on Mn(2+) as a cofactor.

It localises to the cytoplasm. The enzyme catalyses 2-deoxy-alpha-D-ribose 1-phosphate = 2-deoxy-D-ribose 5-phosphate. It carries out the reaction alpha-D-ribose 1-phosphate = D-ribose 5-phosphate. It functions in the pathway carbohydrate degradation; 2-deoxy-D-ribose 1-phosphate degradation; D-glyceraldehyde 3-phosphate and acetaldehyde from 2-deoxy-alpha-D-ribose 1-phosphate: step 1/2. Isomerase that catalyzes the conversion of deoxy-ribose 1-phosphate (dRib-1-P) and ribose 1-phosphate (Rib-1-P) to deoxy-ribose 5-phosphate (dRib-5-P) and ribose 5-phosphate (Rib-5-P), respectively. This chain is Phosphopentomutase, found in Aliivibrio fischeri (strain ATCC 700601 / ES114) (Vibrio fischeri).